The sequence spans 222 residues: DnaJ homolog subfamily B member 9 (222 aa).

A signal peptide spans 1-23 (MATPQSVFVFAICILMITELILA). In terms of domain architecture, J spans 26 to 90 (SYYDILGVPK…NSRKEYDTIG (65 aa)). The segment at 91-222 (HSAFTNGKGQ…VTTYTDCSGQ (132 aa)) is divergent targeting domain. Residue S133 is modified to Phosphoserine.

Interacts with HSPA5/BiP; interaction is direct. Interacts with ERN1/IRE1 (via the luminal region). Interacts with DERL1. In terms of processing, not N-glycosylated.

It is found in the endoplasmic reticulum lumen. In terms of biological role, co-chaperone for Hsp70 protein HSPA5/BiP that acts as a key repressor of the ERN1/IRE1-mediated unfolded protein response (UPR). J domain-containing co-chaperones stimulate the ATPase activity of Hsp70 proteins and are required for efficient substrate recognition by Hsp70 proteins. In the unstressed endoplasmic reticulum, interacts with the luminal region of ERN1/IRE1 and selectively recruits HSPA5/BiP: HSPA5/BiP disrupts the dimerization of the active ERN1/IRE1 luminal region, thereby inactivating ERN1/IRE1. Also involved in endoplasmic reticulum-associated degradation (ERAD) of misfolded proteins. Required for survival of B-cell progenitors and normal antibody production. In Mus musculus (Mouse), this protein is DnaJ homolog subfamily B member 9.